A 120-amino-acid polypeptide reads, in one-letter code: Large ribosomal subunit protein bL20 (120 aa).

This sequence belongs to the bacterial ribosomal protein bL20 family.

Its function is as follows. Binds directly to 23S ribosomal RNA and is necessary for the in vitro assembly process of the 50S ribosomal subunit. It is not involved in the protein synthesizing functions of that subunit. The polypeptide is Large ribosomal subunit protein bL20 (Desulfitobacterium hafniense (strain DSM 10664 / DCB-2)).